We begin with the raw amino-acid sequence, 224 residues long: 7-cyano-7-deazaguanine synthase (224 aa).

L12 to T22 contributes to the ATP binding site. Residues C193, C201, C204, and C207 each coordinate Zn(2+).

Belongs to the QueC family. It depends on Zn(2+) as a cofactor.

The enzyme catalyses 7-carboxy-7-deazaguanine + NH4(+) + ATP = 7-cyano-7-deazaguanine + ADP + phosphate + H2O + H(+). It participates in purine metabolism; 7-cyano-7-deazaguanine biosynthesis. Its function is as follows. Catalyzes the ATP-dependent conversion of 7-carboxy-7-deazaguanine (CDG) to 7-cyano-7-deazaguanine (preQ(0)). This chain is 7-cyano-7-deazaguanine synthase, found in Prochlorococcus marinus (strain MIT 9301).